Consider the following 973-residue polypeptide: Serine/threonine-protein kinase atg1 (973 aa).

Residues 23–328 form the Protein kinase domain; sequence YTRLDEIGRG…FPDFFQNGVI (306 aa). ATP-binding positions include 29 to 37 and K52; that span reads IGRGSFATV. The Proton acceptor role is filled by D166. Disordered stretches follow at residues 338-446, 460-482, 523-587, and 949-973; these read DDLP…PGRQ, RQKG…DKLR, GNIS…QSPT, and PTPS…TPPK. The segment covering 387–407 has biased composition (polar residues); the sequence is GLTQRPPSQNQRFGTPQTTTP. Positions 523 to 537 are enriched in polar residues; sequence GNISRGAQTGALSRR. The segment covering 566–582 has biased composition (basic and acidic residues); it reads SRADSMHNRQGSYERRY. The span at 951-965 shows a compositional bias: polar residues; that stretch reads PSANVPSKMASSNPV.

It belongs to the protein kinase superfamily. Ser/Thr protein kinase family. APG1/unc-51/ULK1 subfamily. Homodimer. Forms a ternary complex with ATG13 and ATG17.

The protein localises to the cytoplasm. It localises to the preautophagosomal structure membrane. The catalysed reaction is L-seryl-[protein] + ATP = O-phospho-L-seryl-[protein] + ADP + H(+). The enzyme catalyses L-threonyl-[protein] + ATP = O-phospho-L-threonyl-[protein] + ADP + H(+). Its function is as follows. Serine/threonine protein kinase involved in the cytoplasm to vacuole transport (Cvt) and found to be essential in autophagy, where it is required for the formation of autophagosomes. Involved in the clearance of protein aggregates which cannot be efficiently cleared by the proteasome. Required for selective autophagic degradation of the nucleus (nucleophagy) as well as for mitophagy which contributes to regulate mitochondrial quantity and quality by eliminating the mitochondria to a basal level to fulfill cellular energy requirements and preventing excess ROS production. Also involved in endoplasmic reticulum-specific autophagic process, in selective removal of ER-associated degradation (ERAD) substrates. Plays a key role in ATG9 and ATG23 cycling through the pre-autophagosomal structure and is necessary to promote ATG18 binding to ATG9 through phosphorylation of ATG9. Catalyzes phosphorylation of ATG4, decreasing the interaction between ATG4 and ATG8 and impairing deconjugation of PE-conjugated forms of ATG8. The polypeptide is Serine/threonine-protein kinase atg1 (Aspergillus fumigatus (strain ATCC MYA-4609 / CBS 101355 / FGSC A1100 / Af293) (Neosartorya fumigata)).